Here is a 280-residue protein sequence, read N- to C-terminus: Fasciclin-like arabinogalactan protein 3 (280 aa).

Positions 1–24 (MGLKVSSSLLCLTILLAVSSIVSA) are cleaved as a signal peptide. The FAS1 domain occupies 25–169 (VNITRVLEKY…LSVVQISMPI (145 aa)). Asparagine 26, asparagine 126, and asparagine 159 each carry an N-linked (GlcNAc...) asparagine glycan. Pro residues predominate over residues 180-193 (VPPPPPMSSPPAPS). The tract at residues 180–262 (VPPPPPMSSP…EPPSSASNTG (83 aa)) is disordered. Residues 219–234 (APETAPASAPSESDSP) show a composition bias toward low complexity. Residue serine 256 is the site of GPI-anchor amidated serine attachment. Residues 257 to 280 (SASNTGLSFGAVLVLGFVASFVGF) constitute a propeptide, removed in mature form.

It belongs to the fasciclin-like AGP family.

The protein localises to the cell membrane. Functionally, may be a cell surface adhesion protein. The chain is Fasciclin-like arabinogalactan protein 3 (FLA3) from Arabidopsis thaliana (Mouse-ear cress).